The chain runs to 226 residues: Putative N-acetylmannosamine-6-phosphate 2-epimerase (226 aa).

The protein belongs to the NanE family.

The enzyme catalyses an N-acyl-D-glucosamine 6-phosphate = an N-acyl-D-mannosamine 6-phosphate. It participates in amino-sugar metabolism; N-acetylneuraminate degradation; D-fructose 6-phosphate from N-acetylneuraminate: step 3/5. In terms of biological role, converts N-acetylmannosamine-6-phosphate (ManNAc-6-P) to N-acetylglucosamine-6-phosphate (GlcNAc-6-P). The polypeptide is Putative N-acetylmannosamine-6-phosphate 2-epimerase (Mycoplasma mycoides subsp. mycoides SC (strain CCUG 32753 / NCTC 10114 / PG1)).